An 88-amino-acid polypeptide reads, in one-letter code: uncharacterized protein (88 aa).

This is an uncharacterized protein from Escherichia coli (strain K12).